A 113-amino-acid chain; its full sequence is Guanylate cyclase activator 2B (113 aa).

A signal peptide spans 1-27 (MASRAAAGLLLCGVALVFLVLLQGTQS). Residues 28 to 97 (VYIQYQGFRV…SIFQALRTIA (70 aa)) constitute a propeptide that is removed on maturation. Cystine bridges form between C68–C81, C101–C109, and C104–C112.

The protein belongs to the guanylin family.

It is found in the secreted. Functionally, endogenous activator of intestinal guanylate cyclase. It stimulates this enzyme through the same receptor binding region as the heat-stable enterotoxins. May be a potent physiological regulator of intestinal fluid and electrolyte transport. May be an autocrine/paracrine regulator of intestinal salt and water transport. In Sus scrofa (Pig), this protein is Guanylate cyclase activator 2B (GUCA2B).